Reading from the N-terminus, the 209-residue chain is Orotate phosphoribosyltransferase (209 aa).

5-phospho-alpha-D-ribose 1-diphosphate is bound by residues Arg96, Lys100, His102, and 122-130 (EDLISTGGS). Ser126 lines the orotate pocket.

This sequence belongs to the purine/pyrimidine phosphoribosyltransferase family. PyrE subfamily. In terms of assembly, homodimer. The cofactor is Mg(2+).

It carries out the reaction orotidine 5'-phosphate + diphosphate = orotate + 5-phospho-alpha-D-ribose 1-diphosphate. Its pathway is pyrimidine metabolism; UMP biosynthesis via de novo pathway; UMP from orotate: step 1/2. Functionally, catalyzes the transfer of a ribosyl phosphate group from 5-phosphoribose 1-diphosphate to orotate, leading to the formation of orotidine monophosphate (OMP). This is Orotate phosphoribosyltransferase from Listeria innocua serovar 6a (strain ATCC BAA-680 / CLIP 11262).